A 696-amino-acid polypeptide reads, in one-letter code: Polyribonucleotide nucleotidyltransferase (696 aa).

Mg(2+) contacts are provided by Asp483 and Asp489. Residues Pro550–Ile609 enclose the KH domain. Residues Gly619–Lys687 form the S1 motif domain.

The protein belongs to the polyribonucleotide nucleotidyltransferase family. Mg(2+) is required as a cofactor.

The protein localises to the cytoplasm. The enzyme catalyses RNA(n+1) + phosphate = RNA(n) + a ribonucleoside 5'-diphosphate. Functionally, involved in mRNA degradation. Catalyzes the phosphorolysis of single-stranded polyribonucleotides processively in the 3'- to 5'-direction. The polypeptide is Polyribonucleotide nucleotidyltransferase (Citrifermentans bemidjiense (strain ATCC BAA-1014 / DSM 16622 / JCM 12645 / Bem) (Geobacter bemidjiensis)).